The primary structure comprises 180 residues: Large ribosomal subunit protein uL5c (180 aa).

It belongs to the universal ribosomal protein uL5 family. As to quaternary structure, part of the 50S ribosomal subunit; contacts the 5S rRNA.

It localises to the plastid. It is found in the chloroplast. In terms of biological role, binds 5S rRNA, forms part of the central protuberance of the 50S subunit. The sequence is that of Large ribosomal subunit protein uL5c (rpl5) from Oedogonium cardiacum (Filamentous green alga).